The sequence spans 283 residues: Protease HtpX (283 aa).

The next 2 helical transmembrane spans lie at 4 to 24 and 33 to 53; these read IALFLATNFAVMIVLGIILSV and GGILIMSVLFGFAGSLISLFM. Residue His-139 coordinates Zn(2+). Glu-140 is a catalytic residue. Residue His-143 participates in Zn(2+) binding. 2 helical membrane-spanning segments follow: residues 147–167 and 192–212; these read GDMVTMTLLQGVLNTFVIFLS and FLVSMVLEILFGVLATIIAMW. Glu-218 contacts Zn(2+).

This sequence belongs to the peptidase M48B family. Zn(2+) is required as a cofactor.

The protein resides in the cell inner membrane. The protein is Protease HtpX of Glaesserella parasuis serovar 5 (strain SH0165) (Haemophilus parasuis).